The chain runs to 442 residues: Na(+)/H(+) antiporter NhaA (442 aa).

The next 11 membrane-spanning stretches (helical) occupy residues 32-52 (IGGG…NSPW), 73-93 (LTLA…VAGL), 111-131 (AVPV…YALV), 139-159 (AGWA…LAVI), 170-190 (FLLT…AVVY), 193-213 (HLSI…TLLV), 234-254 (VHAS…AVPV), 284-304 (VAVP…LSGL), 316-336 (VVLG…FLVA), 352-372 (VLGL…IGEL), and 383-403 (HVKI…AVVL). The segment covering 423-435 (HDGIPDVYQDLHR) has biased composition (basic and acidic residues). Residues 423–442 (HDGIPDVYQDLHRSSPRPWG) are disordered.

This sequence belongs to the NhaA Na(+)/H(+) (TC 2.A.33) antiporter family.

It localises to the cell membrane. The enzyme catalyses Na(+)(in) + 2 H(+)(out) = Na(+)(out) + 2 H(+)(in). In terms of biological role, na(+)/H(+) antiporter that extrudes sodium in exchange for external protons. In Frankia casuarinae (strain DSM 45818 / CECT 9043 / HFP020203 / CcI3), this protein is Na(+)/H(+) antiporter NhaA.